Consider the following 432-residue polypeptide: ATP-dependent RNA helicase RhlB (432 aa).

Residues 9-37 (QRFADLPLHAEVIQALNENGFEFCTPIQA) carry the Q motif motif. A Helicase ATP-binding domain is found at 40–219 (LPVLLKAKDI…YDHMNDPEKV (180 aa)). 53–60 (AQTGTGKT) is an ATP binding site. Residues 165 to 168 (DEAD) carry the DEAD box motif. In terms of domain architecture, Helicase C-terminal spans 243-390 (KMRLLLTLME…VSRYDREALL (148 aa)). The tract at residues 395–432 (TPVKIHRKHPTSRTRDGAKGAHRSGGARPPRHRTRRPS) is disordered. Basic residues predominate over residues 423-432 (PPRHRTRRPS).

This sequence belongs to the DEAD box helicase family. RhlB subfamily. In terms of assembly, component of the RNA degradosome, which is a multiprotein complex involved in RNA processing and mRNA degradation.

It localises to the cytoplasm. It carries out the reaction ATP + H2O = ADP + phosphate + H(+). In terms of biological role, DEAD-box RNA helicase involved in RNA degradation. Has RNA-dependent ATPase activity and unwinds double-stranded RNA. This is ATP-dependent RNA helicase RhlB from Shewanella denitrificans (strain OS217 / ATCC BAA-1090 / DSM 15013).